A 547-amino-acid chain; its full sequence is CTP synthase (547 aa).

Positions 1–265 (MTKFVFVTGG…DRIVCEKLAL (265 aa)) are amidoligase domain. Position 13 (Ser13) interacts with CTP. Ser13 provides a ligand contact to UTP. Residues 14–19 (SLGKGI) and Asp71 contribute to the ATP site. Asp71 and Glu139 together coordinate Mg(2+). CTP contacts are provided by residues 146–148 (DIE), 186–191 (KTKPTQ), and Lys222. UTP-binding positions include 186–191 (KTKPTQ) and Lys222. Residues 290–542 (TIGMVGKYVD…IKAALAHKHA (253 aa)) form the Glutamine amidotransferase type-1 domain. Residue Gly351 coordinates L-glutamine. Residue Cys378 is the Nucleophile; for glutamine hydrolysis of the active site. L-glutamine-binding positions include 379 to 382 (LGMQ), Glu402, and Arg468. Residues His515 and Glu517 contribute to the active site.

It belongs to the CTP synthase family. As to quaternary structure, homotetramer.

It catalyses the reaction UTP + L-glutamine + ATP + H2O = CTP + L-glutamate + ADP + phosphate + 2 H(+). It carries out the reaction L-glutamine + H2O = L-glutamate + NH4(+). The catalysed reaction is UTP + NH4(+) + ATP = CTP + ADP + phosphate + 2 H(+). It participates in pyrimidine metabolism; CTP biosynthesis via de novo pathway; CTP from UDP: step 2/2. With respect to regulation, allosterically activated by GTP, when glutamine is the substrate; GTP has no effect on the reaction when ammonia is the substrate. The allosteric effector GTP functions by stabilizing the protein conformation that binds the tetrahedral intermediate(s) formed during glutamine hydrolysis. Inhibited by the product CTP, via allosteric rather than competitive inhibition. In terms of biological role, catalyzes the ATP-dependent amination of UTP to CTP with either L-glutamine or ammonia as the source of nitrogen. Regulates intracellular CTP levels through interactions with the four ribonucleotide triphosphates. This Janthinobacterium sp. (strain Marseille) (Minibacterium massiliensis) protein is CTP synthase.